The primary structure comprises 396 residues: E3 ubiquitin-protein ligase NHLRC1 (396 aa).

Residues 23 to 69 form an RING-type zinc finger; the sequence is CKVCFERFGHRQQRRPRNLPCGHVVCLACVAALAHPRTLALECPFCR. NHL repeat units lie at residues 110 to 154, 158 to 201, 202 to 242, 245 to 298, 299 to 347, and 348 to 391; these read ALTC…FDSG, AHQF…FDFF, GQIK…LEAD, EGVL…FNSS, MQLI…LGKP, and EEFP…FKVM.

Interacts with AGL. Interacts (via the NHL repeats) with EPM2A/laforin. Forms a complex with EPM2A/laforin and HSP70.

The protein localises to the endoplasmic reticulum. It is found in the nucleus. It carries out the reaction S-ubiquitinyl-[E2 ubiquitin-conjugating enzyme]-L-cysteine + [acceptor protein]-L-lysine = [E2 ubiquitin-conjugating enzyme]-L-cysteine + N(6)-ubiquitinyl-[acceptor protein]-L-lysine.. Its pathway is protein modification; protein ubiquitination. Its function is as follows. E3 ubiquitin-protein ligase. Together with the phosphatase EPM2A/laforin, appears to be involved in the clearance of toxic polyglucosan and protein aggregates via multiple pathways. In complex with EPM2A/laforin and HSP70, suppresses the cellular toxicity of misfolded proteins by promoting their degradation through the ubiquitin-proteasome system (UPS). Ubiquitinates the glycogen-targeting protein phosphatase subunits PPP1R3C/PTG and PPP1R3D in a laforin-dependent manner and targets them for proteasome-dependent degradation, thus decreasing glycogen accumulation. Polyubiquitinates EPM2A/laforin and ubiquitinates AGL and targets them for proteasome-dependent degradation. Also promotes proteasome-independent protein degradation through the macroautophagy pathway. The chain is E3 ubiquitin-protein ligase NHLRC1 (Nhlrc1) from Rattus norvegicus (Rat).